Here is a 138-residue protein sequence, read N- to C-terminus: Flagellar assembly factor FliW (138 aa).

It belongs to the FliW family. Interacts with translational regulator CsrA and flagellin(s).

It is found in the cytoplasm. Acts as an anti-CsrA protein, binds CsrA and prevents it from repressing translation of its target genes, one of which is flagellin. Binds to flagellin and participates in the assembly of the flagellum. The chain is Flagellar assembly factor FliW from Symbiobacterium thermophilum (strain DSM 24528 / JCM 14929 / IAM 14863 / T).